The following is a 61-amino-acid chain: Small ribosomal subunit protein uS14 (61 aa).

Residues C24, C27, C40, and C43 each contribute to the Zn(2+) site.

The protein belongs to the universal ribosomal protein uS14 family. Zinc-binding uS14 subfamily. Part of the 30S ribosomal subunit. Contacts proteins S3 and S10. Zn(2+) is required as a cofactor.

Its function is as follows. Binds 16S rRNA, required for the assembly of 30S particles and may also be responsible for determining the conformation of the 16S rRNA at the A site. The protein is Small ribosomal subunit protein uS14 of Bacillus anthracis (strain A0248).